Consider the following 104-residue polypeptide: Large ribosomal subunit protein uL24 (104 aa).

It belongs to the universal ribosomal protein uL24 family. As to quaternary structure, part of the 50S ribosomal subunit.

Its function is as follows. One of two assembly initiator proteins, it binds directly to the 5'-end of the 23S rRNA, where it nucleates assembly of the 50S subunit. In terms of biological role, one of the proteins that surrounds the polypeptide exit tunnel on the outside of the subunit. The sequence is that of Large ribosomal subunit protein uL24 from Maricaulis maris (strain MCS10) (Caulobacter maris).